The sequence spans 70 residues: Pyruvate-flavodoxin oxidoreductase (70 aa).

Belongs to the pyruvate:ferredoxin/flavodoxin oxidoreductase family.

It carries out the reaction oxidized [flavodoxin] + pyruvate + CoA + 2 H(+) = reduced [flavodoxin] + acetyl-CoA + CO2. In terms of biological role, oxidoreductase required for the transfer of electrons from pyruvate to flavodoxin, which reduces nitrogenase. In Anabaena variabilis, this protein is Pyruvate-flavodoxin oxidoreductase (nifJ).